A 290-amino-acid chain; its full sequence is Ribosomal protein L11 methyltransferase (290 aa).

S-adenosyl-L-methionine-binding residues include T136, G159, D181, and N228.

It belongs to the methyltransferase superfamily. PrmA family.

It localises to the cytoplasm. It carries out the reaction L-lysyl-[protein] + 3 S-adenosyl-L-methionine = N(6),N(6),N(6)-trimethyl-L-lysyl-[protein] + 3 S-adenosyl-L-homocysteine + 3 H(+). Methylates ribosomal protein L11. The protein is Ribosomal protein L11 methyltransferase of Allorhizobium ampelinum (strain ATCC BAA-846 / DSM 112012 / S4) (Agrobacterium vitis (strain S4)).